The chain runs to 634 residues: DNA-directed RNA polymerase subunit gamma (634 aa).

Residues Cys74, Cys76, Cys89, and Cys92 each coordinate Zn(2+). Positions 471, 473, and 475 each coordinate Mg(2+).

The protein belongs to the RNA polymerase beta' chain family. RpoC1 subfamily. In terms of assembly, in cyanobacteria the RNAP catalytic core is composed of 2 alpha, 1 beta, 1 beta', 1 gamma and 1 omega subunit. When a sigma factor is associated with the core the holoenzyme is formed, which can initiate transcription. Requires Mg(2+) as cofactor. It depends on Zn(2+) as a cofactor.

It catalyses the reaction RNA(n) + a ribonucleoside 5'-triphosphate = RNA(n+1) + diphosphate. Its function is as follows. DNA-dependent RNA polymerase catalyzes the transcription of DNA into RNA using the four ribonucleoside triphosphates as substrates. The polypeptide is DNA-directed RNA polymerase subunit gamma (Prochlorococcus marinus (strain SARG / CCMP1375 / SS120)).